Here is a 188-residue protein sequence, read N- to C-terminus: Ubiquitin-conjugating enzyme E2-21 kDa (188 aa).

Positions 3-182 constitute a UBC core domain; it reads STEKRLLKEY…VHYYIAKYSA (180 aa). The active-site Glycyl thioester intermediate is the C119.

Belongs to the ubiquitin-conjugating enzyme family.

The enzyme catalyses S-ubiquitinyl-[E1 ubiquitin-activating enzyme]-L-cysteine + [E2 ubiquitin-conjugating enzyme]-L-cysteine = [E1 ubiquitin-activating enzyme]-L-cysteine + S-ubiquitinyl-[E2 ubiquitin-conjugating enzyme]-L-cysteine.. Its pathway is protein modification; protein ubiquitination. Functionally, catalyzes the covalent attachment of ubiquitin to other proteins. Essential for peroxisome biogenesis. Required for UBC4-independent ubiquitination of PEX5. The chain is Ubiquitin-conjugating enzyme E2-21 kDa (PEX4) from Pichia angusta (Yeast).